We begin with the raw amino-acid sequence, 86 residues long: Sec-independent protein translocase protein TatA (86 aa).

The chain crosses the membrane as a helical span at residues 1–21 (MGISIWQLLIILAIVLVLFGA).

This sequence belongs to the TatA/E family. The Tat system comprises two distinct complexes: a TatABC complex, containing multiple copies of TatA, TatB and TatC subunits, and a separate TatA complex, containing only TatA subunits. Substrates initially bind to the TatABC complex, which probably triggers association of the separate TatA complex to form the active translocon.

Its subcellular location is the cell inner membrane. Its function is as follows. Part of the twin-arginine translocation (Tat) system that transports large folded proteins containing a characteristic twin-arginine motif in their signal peptide across membranes. TatA could form the protein-conducting channel of the Tat system. The polypeptide is Sec-independent protein translocase protein TatA (Hydrogenovibrio crunogenus (strain DSM 25203 / XCL-2) (Thiomicrospira crunogena)).